Here is a 97-residue protein sequence, read N- to C-terminus: CRISPR-associated endoribonuclease Cas2 1 (97 aa).

A Mg(2+)-binding site is contributed by Asp-12.

It belongs to the CRISPR-associated endoribonuclease Cas2 protein family. Homodimer, forms a heterotetramer with a Cas1 homodimer. It depends on Mg(2+) as a cofactor.

In terms of biological role, CRISPR (clustered regularly interspaced short palindromic repeat) is an adaptive immune system that provides protection against mobile genetic elements (viruses, transposable elements and conjugative plasmids). CRISPR clusters contain sequences complementary to antecedent mobile elements and target invading nucleic acids. CRISPR clusters are transcribed and processed into CRISPR RNA (crRNA). Functions as a ssRNA-specific endoribonuclease. Involved in the integration of spacer DNA into the CRISPR cassette. The protein is CRISPR-associated endoribonuclease Cas2 1 of Francisella tularensis subsp. novicida (strain U112).